We begin with the raw amino-acid sequence, 185 residues long: Ribosome-recycling factor (185 aa).

Belongs to the RRF family.

It localises to the cytoplasm. Functionally, responsible for the release of ribosomes from messenger RNA at the termination of protein biosynthesis. May increase the efficiency of translation by recycling ribosomes from one round of translation to another. The sequence is that of Ribosome-recycling factor from Aliivibrio fischeri (strain ATCC 700601 / ES114) (Vibrio fischeri).